The sequence spans 346 residues: Putative aminopeptidase YhfE (346 aa).

A divalent metal cation-binding residues include histidine 68 and aspartate 185. The active-site Proton acceptor is the glutamate 219. Glutamate 220, aspartate 240, and histidine 320 together coordinate a divalent metal cation.

It belongs to the peptidase M42 family. Requires a divalent metal cation as cofactor.

The protein is Putative aminopeptidase YhfE (yhfE) of Bacillus subtilis (strain 168).